The primary structure comprises 685 residues: Hemocyanin subunit X (685 aa).

The signal sequence occupies residues 1-20 (MKYCTESLILILAVIGCISA). 3 residues coordinate Cu cation: His210, His214, and His243. Asn329 is a glycosylation site (N-linked (GlcNAc...) asparagine). Cu cation-binding residues include His367, His371, and His407. A disulfide bridge connects residues Cys577 and Cys625.

It belongs to the tyrosinase family. Hemocyanin subfamily.

It localises to the secreted. It is found in the extracellular space. Hemocyanins are copper-containing oxygen carriers occurring freely dissolved in the hemolymph of many mollusks and arthropods. This is Hemocyanin subunit X (HCX) from Scutigera coleoptrata (House centipede).